The sequence spans 178 residues: PRA1 family protein 2 (178 aa).

Residues 1 to 41 (MSEVRLPPLRALDDFVLGSARLAAPDPGDPQRWCHRVINNL) lie on the Cytoplasmic side of the membrane. The helical transmembrane segment at 42–62 (LYYQTNYLLCFGISLALAGYI) threads the bilayer. Residues 63-64 (RP) lie on the Extracellular side of the membrane. Residues 65 to 85 (LHTLLSALVVVVALGVLVWAA) traverse the membrane as a helical segment. The Cytoplasmic segment spans residues 86 to 96 (ETRAAVRRCRR). The chain crosses the membrane as a helical span at residues 97–119 (SHPAACLAAVLAISLFILWAVGG). Topologically, residues 120-122 (AFT) are extracellular. Residues 123–140 (FLLSITAPVFLILLHASL) form a helical membrane-spanning segment. Over 141 to 178 (RLRNLKNKIENKIESIGLKRTPMGLLLEALGQEQEAGS) the chain is Cytoplasmic.

It belongs to the PRA1 family. Interacts with CCR5 and GDE1.

It is found in the endosome membrane. May be involved in ER/Golgi transport and vesicular traffic. Plays a proapoptotic role in cerulenin-induced neuroblastoma apoptosis. This Mus musculus (Mouse) protein is PRA1 family protein 2 (Praf2).